Here is a 126-residue protein sequence, read N- to C-terminus: Large ribosomal subunit protein uL22c (126 aa).

The protein belongs to the universal ribosomal protein uL22 family. Part of the 50S ribosomal subunit.

It is found in the plastid. It localises to the chloroplast. Its function is as follows. This protein binds specifically to 23S rRNA. The globular domain of the protein is located near the polypeptide exit tunnel on the outside of the subunit, while an extended beta-hairpin is found that lines the wall of the exit tunnel in the center of the 70S ribosome. The polypeptide is Large ribosomal subunit protein uL22c (rpl22) (Cryptomeria japonica (Japanese cedar)).